We begin with the raw amino-acid sequence, 273 residues long: Ethanolamine ammonia-lyase small subunit (273 aa).

Residues Val164, Glu185, and Cys214 each contribute to the adenosylcob(III)alamin site.

The protein belongs to the EutC family. As to quaternary structure, the basic unit is a heterodimer which dimerizes to form tetramers. The heterotetramers trimerize; 6 large subunits form a core ring with 6 small subunits projecting outwards. Adenosylcob(III)alamin serves as cofactor.

The protein localises to the bacterial microcompartment. It catalyses the reaction ethanolamine = acetaldehyde + NH4(+). The protein operates within amine and polyamine degradation; ethanolamine degradation. In terms of biological role, catalyzes the deamination of various vicinal amino-alcohols to oxo compounds. Allows this organism to utilize ethanolamine as the sole source of nitrogen and carbon in the presence of external vitamin B12. The sequence is that of Ethanolamine ammonia-lyase small subunit from Pseudomonas aeruginosa (strain UCBPP-PA14).